The chain runs to 185 residues: uncharacterized protein (185 aa).

The Cytoplasmic segment spans residues 1 to 69; it reads MSSFIDSIKS…SSDCSRAERT (69 aa). Residues 70 to 90 traverse the membrane as a helical segment; the sequence is FNLILFAIVDLVICCESMAFF. Position 91 (Asn91) is a topological domain, extracellular. A helical membrane pass occupies residues 92–112; sequence LLLKLPSMLLVSFLTMLVFSI. Residues 113–118 are Cytoplasmic-facing; that stretch reads SYSWSA. Residues 119–139 form a helical membrane-spanning segment; the sequence is FNWISFAFSSASFLMKACILF. The Extracellular segment spans residues 140–185; sequence NSSFTWFGVKAVIAEDMLYRMVRGLFCASFVKQLQTTFLATAIVLC.

It is found in the membrane. This is an uncharacterized protein from Saccharomyces cerevisiae (strain ATCC 204508 / S288c) (Baker's yeast).